Here is a 227-residue protein sequence, read N- to C-terminus: UPF0173 metal-dependent hydrolase Saci_1512 (227 aa).

This sequence belongs to the UPF0173 family.

This chain is UPF0173 metal-dependent hydrolase Saci_1512, found in Sulfolobus acidocaldarius (strain ATCC 33909 / DSM 639 / JCM 8929 / NBRC 15157 / NCIMB 11770).